A 237-amino-acid polypeptide reads, in one-letter code: ADTIVAVELDTYPNTDIGDPSYPHIGIDIKSVRSKKTAKWNMQNGKVGTAHIIYNSVGKRLSAVVSYPNGDSATVSYDVDLDNVLPEWVRVGLSATTGLYKETNTILSWSFTSKLKSNSTHETNALHFMFNQFSKDQKDLILQGDATTGRDGNLELTRVSSNGSPQGSSVGRALFYAPVHIWESSAVVASFDATFTFLIKSSDSHPADGIAFFISNIDSSIPSGSTGRLLGLFPDAN.

Positions 8 and 10 each coordinate Mn(2+). Residues D10, Y12, N14, and D19 each contribute to the Ca(2+) site. A carbohydrate contacts are provided by Y12 and N14. Residues D19 and H24 each coordinate Mn(2+). 99-100 serves as a coordination point for a carbohydrate; it reads LY. D208 serves as a coordination point for Ca(2+). R228 contacts a carbohydrate.

It belongs to the leguminous lectin family. Homodimer and homotetramer. Oligomerization is pH-dependent with homotetramers forming at pH 4 and above.

In terms of biological role, D-mannose/D-glucose-binding lectin. Has anti-inflammatory activity in animal models when applied intravenously. Has antinociceptive activity in mice when applied intravenously. The protein is Lectin alpha chain of Canavalia boliviana.